The following is a 102-amino-acid chain: Flagellar hook-basal body complex protein FliE 1 (102 aa).

The protein belongs to the FliE family.

The protein resides in the bacterial flagellum basal body. The protein is Flagellar hook-basal body complex protein FliE 1 (fliE1) of Bradyrhizobium diazoefficiens (strain JCM 10833 / BCRC 13528 / IAM 13628 / NBRC 14792 / USDA 110).